We begin with the raw amino-acid sequence, 218 residues long: Octanoyltransferase (218 aa).

One can recognise a BPL/LPL catalytic domain in the interval 31 to 206 (REAGDEVWLV…QLVKHLDYAE (176 aa)). Substrate-binding positions include 70-77 (RGGQVTYH), 137-139 (SLG), and 150-152 (GLA). Residue Cys-168 is the Acyl-thioester intermediate of the active site.

It belongs to the LipB family.

It is found in the cytoplasm. It catalyses the reaction octanoyl-[ACP] + L-lysyl-[protein] = N(6)-octanoyl-L-lysyl-[protein] + holo-[ACP] + H(+). Its pathway is protein modification; protein lipoylation via endogenous pathway; protein N(6)-(lipoyl)lysine from octanoyl-[acyl-carrier-protein]: step 1/2. Functionally, catalyzes the transfer of endogenously produced octanoic acid from octanoyl-acyl-carrier-protein onto the lipoyl domains of lipoate-dependent enzymes. Lipoyl-ACP can also act as a substrate although octanoyl-ACP is likely to be the physiological substrate. The sequence is that of Octanoyltransferase from Pseudomonas syringae pv. tomato (strain ATCC BAA-871 / DC3000).